The chain runs to 701 residues: F-box/LRR-repeat protein 17 (701 aa).

3 disordered regions span residues 73 to 93 (SAGLEEEPPLSPPPPPPRDGA), 227 to 250 (GGGGPAGGGASPPRPPDAGCCQAP), and 279 to 321 (VRAG…IPDI). Residues 81 to 90 (PLSPPPPPPR) are compositionally biased toward pro residues. Gly residues predominate over residues 227–236 (GGGGPAGGGA). Residues 285–294 (APSSAQQQPE) show a composition bias toward polar residues. One can recognise an F-box domain in the interval 318–365 (IPDINQLPPSILLKIFSNLSLNERCLSASLVCKYWRDLCLDFQFWKQL).

Belongs to the FBXL17 family. As to quaternary structure, part of the SCF (SKP1-CUL1-F-box) E3 ubiquitin-protein ligase complex SCF(FBXL17) composed of CUL1, SKP1, RBX1 and FBXL17. Interacts with BTB domain-containing proteins such as KLHL12, BCL6 and BACH1; specifically recognizes and binds a conserved degron of non-consecutive residues present at the interface of BTB dimers of aberrant composition. Interacts with SUFU. Interacts with PRMT1.

It localises to the cytoplasm. The protein localises to the nucleus. Functionally, substrate-recognition component of the SCF(FBXL17) E3 ubiquitin ligase complex, a key component of a quality control pathway required to ensure functional dimerization of BTB domain-containing proteins (dimerization quality control, DQC). FBXL17 specifically recognizes and binds a conserved degron of non-consecutive residues present at the interface of BTB dimers of aberrant composition: aberrant BTB dimer are then ubiquitinated by the SCF(FBXL17) complex and degraded by the proteasome. The ability of the SCF(FBXL17) complex to eliminate compromised BTB dimers is required for the differentiation and survival of neural crest and neuronal cells. The SCF(FBXL17) complex mediates ubiquitination and degradation of BACH1. The SCF(FBXL17) complex is also involved in the regulation of the hedgehog/smoothened (Hh) signaling pathway by mediating the ubiquitination and degradation of SUFU, allowing the release of GLI1 from SUFU for proper Hh signal transduction. The SCF(FBXL17) complex mediates ubiquitination and degradation of PRMT1. The chain is F-box/LRR-repeat protein 17 from Mus musculus (Mouse).